Here is a 487-residue protein sequence, read N- to C-terminus: GTPase Der (487 aa).

2 consecutive EngA-type G domains span residues 3-166 and 193-366; these read PVIA…PRDA and IKIA…KSAV. GTP contacts are provided by residues 9 to 16, 56 to 60, 118 to 121, 199 to 206, 246 to 250, and 311 to 314; these read GRPNVGKS, DTGGI, NKID, DTAGV, and NKWD. Residues 367–451 form the KH-like domain; sequence TRWPTSRLTQ…PIRIEYKGGE (85 aa). Residues 448-461 are compositionally biased toward basic and acidic residues; the sequence is KGGENPYEGKKNTL. Residues 448–487 are disordered; that stretch reads KGGENPYEGKKNTLTDRQVNKKRRLMSHHKKAEKKRRDKR. Basic residues predominate over residues 467–487; sequence NKKRRLMSHHKKAEKKRRDKR.

This sequence belongs to the TRAFAC class TrmE-Era-EngA-EngB-Septin-like GTPase superfamily. EngA (Der) GTPase family. In terms of assembly, associates with the 50S ribosomal subunit.

In terms of biological role, GTPase that plays an essential role in the late steps of ribosome biogenesis. In Pseudomonas putida (strain W619), this protein is GTPase Der.